The following is a 456-amino-acid chain: UDP-N-acetylmuramate--L-alanine ligase (456 aa).

Residue 118–124 (GTHGKST) participates in ATP binding.

This sequence belongs to the MurCDEF family.

It is found in the cytoplasm. It carries out the reaction UDP-N-acetyl-alpha-D-muramate + L-alanine + ATP = UDP-N-acetyl-alpha-D-muramoyl-L-alanine + ADP + phosphate + H(+). The protein operates within cell wall biogenesis; peptidoglycan biosynthesis. In terms of biological role, cell wall formation. This is UDP-N-acetylmuramate--L-alanine ligase from Paenarthrobacter aurescens (strain TC1).